Consider the following 457-residue polypeptide: Bifunctional protein GlmU (457 aa).

Residues methionine 1–arginine 232 are pyrophosphorylase. Residues leucine 9–glycine 12, lysine 23, glutamine 75, and glycine 80–threonine 81 each bind UDP-N-acetyl-alpha-D-glucosamine. A Mg(2+)-binding site is contributed by aspartate 105. The UDP-N-acetyl-alpha-D-glucosamine site is built by glycine 142, glutamate 157, asparagine 172, and asparagine 230. Asparagine 230 contributes to the Mg(2+) binding site. The interval alanine 233–aspartate 253 is linker. An N-acetyltransferase region spans residues glycine 254–lysine 457. The UDP-N-acetyl-alpha-D-glucosamine site is built by arginine 336 and lysine 354. Histidine 366 acts as the Proton acceptor in catalysis. Tyrosine 369 and asparagine 380 together coordinate UDP-N-acetyl-alpha-D-glucosamine. Acetyl-CoA-binding positions include asparagine 389 to tyrosine 390, serine 408, alanine 426, and arginine 443.

The protein in the N-terminal section; belongs to the N-acetylglucosamine-1-phosphate uridyltransferase family. This sequence in the C-terminal section; belongs to the transferase hexapeptide repeat family. In terms of assembly, homotrimer. Mg(2+) is required as a cofactor.

It localises to the cytoplasm. It carries out the reaction alpha-D-glucosamine 1-phosphate + acetyl-CoA = N-acetyl-alpha-D-glucosamine 1-phosphate + CoA + H(+). The catalysed reaction is N-acetyl-alpha-D-glucosamine 1-phosphate + UTP + H(+) = UDP-N-acetyl-alpha-D-glucosamine + diphosphate. It participates in nucleotide-sugar biosynthesis; UDP-N-acetyl-alpha-D-glucosamine biosynthesis; N-acetyl-alpha-D-glucosamine 1-phosphate from alpha-D-glucosamine 6-phosphate (route II): step 2/2. It functions in the pathway nucleotide-sugar biosynthesis; UDP-N-acetyl-alpha-D-glucosamine biosynthesis; UDP-N-acetyl-alpha-D-glucosamine from N-acetyl-alpha-D-glucosamine 1-phosphate: step 1/1. Its pathway is bacterial outer membrane biogenesis; LPS lipid A biosynthesis. Catalyzes the last two sequential reactions in the de novo biosynthetic pathway for UDP-N-acetylglucosamine (UDP-GlcNAc). The C-terminal domain catalyzes the transfer of acetyl group from acetyl coenzyme A to glucosamine-1-phosphate (GlcN-1-P) to produce N-acetylglucosamine-1-phosphate (GlcNAc-1-P), which is converted into UDP-GlcNAc by the transfer of uridine 5-monophosphate (from uridine 5-triphosphate), a reaction catalyzed by the N-terminal domain. The protein is Bifunctional protein GlmU of Geotalea uraniireducens (strain Rf4) (Geobacter uraniireducens).